The primary structure comprises 457 residues: Biphenyl dioxygenase subunit alpha (457 aa).

A Rieske domain is found at 58–174 (WLMLGHETHI…VETYKGLVFA (117 aa)). [2Fe-2S] cluster-binding residues include Cys100, His102, Cys120, and His123. Positions 233 and 239 each coordinate Fe cation.

This sequence belongs to the bacterial ring-hydroxylating dioxygenase alpha subunit family. Heterohexamer consisting of three BphA subunits and three BphE subunits. A ferredoxin (BphF) and a ferredoxin reductase (BphG) must be present to obtain activity. [2Fe-2S] cluster is required as a cofactor. Requires Fe cation as cofactor.

It catalyses the reaction biphenyl + NADH + O2 + H(+) = (2R,3S)-3-phenylcyclohexa-3,5-diene-1,2-diol + NAD(+). The protein operates within xenobiotic degradation; biphenyl degradation; 2-hydroxy-2,4-pentadienoate and benzoate from biphenyl: step 1/4. In Comamonas testosteroni (Pseudomonas testosteroni), this protein is Biphenyl dioxygenase subunit alpha (bphA).